Here is a 262-residue protein sequence, read N- to C-terminus: Acyl-[acyl-carrier-protein]--UDP-N-acetylglucosamine O-acyltransferase (262 aa).

The protein belongs to the transferase hexapeptide repeat family. LpxA subfamily. Homotrimer.

It is found in the cytoplasm. It carries out the reaction a (3R)-hydroxyacyl-[ACP] + UDP-N-acetyl-alpha-D-glucosamine = a UDP-3-O-[(3R)-3-hydroxyacyl]-N-acetyl-alpha-D-glucosamine + holo-[ACP]. The protein operates within glycolipid biosynthesis; lipid IV(A) biosynthesis; lipid IV(A) from (3R)-3-hydroxytetradecanoyl-[acyl-carrier-protein] and UDP-N-acetyl-alpha-D-glucosamine: step 1/6. Functionally, involved in the biosynthesis of lipid A, a phosphorylated glycolipid that anchors the lipopolysaccharide to the outer membrane of the cell. In Yersinia pseudotuberculosis serotype O:1b (strain IP 31758), this protein is Acyl-[acyl-carrier-protein]--UDP-N-acetylglucosamine O-acyltransferase.